A 538-amino-acid chain; its full sequence is Phosphoenolpyruvate carboxykinase (ATP) (538 aa).

Substrate contacts are provided by Arg64, Tyr206, and Lys212. Residues Lys212, His231, and 247–255 (GLSGTGKTT) contribute to the ATP site. Mn(2+) contacts are provided by Lys212 and His231. Residue Asp268 coordinates Mn(2+). Residues Glu296, Arg332, 448 to 449 (RI), and Thr454 contribute to the ATP site. A substrate-binding site is contributed by Arg332.

This sequence belongs to the phosphoenolpyruvate carboxykinase (ATP) family. Monomer. Mn(2+) is required as a cofactor.

It is found in the cytoplasm. The catalysed reaction is oxaloacetate + ATP = phosphoenolpyruvate + ADP + CO2. It participates in carbohydrate biosynthesis; gluconeogenesis. In terms of biological role, involved in the gluconeogenesis. Catalyzes the conversion of oxaloacetate (OAA) to phosphoenolpyruvate (PEP) through direct phosphoryl transfer between the nucleoside triphosphate and OAA. This chain is Phosphoenolpyruvate carboxykinase (ATP), found in Enterobacter sp. (strain 638).